A 491-amino-acid chain; its full sequence is Cytochrome P450 2F3 (491 aa).

Cys436 contacts heme.

The protein belongs to the cytochrome P450 family. Requires heme as cofactor. In terms of tissue distribution, lung specific.

The protein resides in the endoplasmic reticulum membrane. It is found in the microsome membrane. The enzyme catalyses an organic molecule + reduced [NADPH--hemoprotein reductase] + O2 = an alcohol + oxidized [NADPH--hemoprotein reductase] + H2O + H(+). Its function is as follows. Bioactivates 3-methylindole (3MI) by dehydrogenation to the putative electrophile 3-methylene-indolenine. Stereoselectively catalyzes the formation of the 1R,2S-oxide from naphthalene. Lack activity with other common P450 substrates including 7-ethoxycoumarin. This Capra hircus (Goat) protein is Cytochrome P450 2F3 (CYP2F3).